The chain runs to 173 residues: ATP synthase subunit b (173 aa).

A helical transmembrane segment spans residues 15-35 (LYVGDMLFYAILFIVLMALIA).

Belongs to the ATPase B chain family. As to quaternary structure, F-type ATPases have 2 components, F(1) - the catalytic core - and F(0) - the membrane proton channel. F(1) has five subunits: alpha(3), beta(3), gamma(1), delta(1), epsilon(1). F(0) has three main subunits: a(1), b(2) and c(10-14). The alpha and beta chains form an alternating ring which encloses part of the gamma chain. F(1) is attached to F(0) by a central stalk formed by the gamma and epsilon chains, while a peripheral stalk is formed by the delta and b chains.

Its subcellular location is the cell membrane. F(1)F(0) ATP synthase produces ATP from ADP in the presence of a proton or sodium gradient. F-type ATPases consist of two structural domains, F(1) containing the extramembraneous catalytic core and F(0) containing the membrane proton channel, linked together by a central stalk and a peripheral stalk. During catalysis, ATP synthesis in the catalytic domain of F(1) is coupled via a rotary mechanism of the central stalk subunits to proton translocation. Functionally, component of the F(0) channel, it forms part of the peripheral stalk, linking F(1) to F(0). The chain is ATP synthase subunit b from Pediococcus pentosaceus (strain ATCC 25745 / CCUG 21536 / LMG 10740 / 183-1w).